The sequence spans 73 residues: Putative ORF9c protein (73 aa).

The chain crosses the membrane as a helical span at residues 47–67 (AAVGELLLLEWLAMAVMLLLL).

It localises to the membrane. In terms of biological role, may induce apoptosis in cardiomyocytes when overexpressed ex-vivo. The protein is Putative ORF9c protein of Homo sapiens (Human).